A 319-amino-acid polypeptide reads, in one-letter code: Pantothenate kinase (319 aa).

101 to 108 (GSVAVGKS) is an ATP binding site.

Belongs to the prokaryotic pantothenate kinase family.

The protein resides in the cytoplasm. The enzyme catalyses (R)-pantothenate + ATP = (R)-4'-phosphopantothenate + ADP + H(+). It participates in cofactor biosynthesis; coenzyme A biosynthesis; CoA from (R)-pantothenate: step 1/5. This is Pantothenate kinase from Clavibacter michiganensis subsp. michiganensis (strain NCPPB 382).